We begin with the raw amino-acid sequence, 60 residues long: UPF0509 protein ESA_01586 (60 aa).

The protein belongs to the UPF0509 family.

The sequence is that of UPF0509 protein ESA_01586 from Cronobacter sakazakii (strain ATCC BAA-894) (Enterobacter sakazakii).